A 714-amino-acid polypeptide reads, in one-letter code: Delta-like protein 1 (714 aa).

An N-terminal signal peptide occupies residues 1 to 17 (MGRRSALALAVVSALLC). Residues 18–537 (QVWSSGVFEL…VAAQGGSFPW (520 aa)) are Extracellular-facing. The DSL domain maps to 176–220 (FVCDEHYYGEGCSVFCRPRDDAFGHFTCGERGEKMCDPGWKGQYC). Intrachain disulfides connect C178–C187, C191–C203, C211–C220, C225–C236, C229–C242, C244–C253, C256–C267, C262–C273, C275–C284, C291–C303, C297–C313, C315–C324, C331–C342, C336–C351, C353–C362, C369–C380, C374–C390, C392–C401, C408–C419, C413–C428, C430–C439, C446–C457, C451–C466, C468–C477, C484–C495, C489–C504, and C506–C515. EGF-like domains follow at residues 225-253 (CLPGCDDQHGYCDKPGECKCRVGWQGRYC), 256-284 (CIRYPGCLHGTCQQPWQCNCQEGWGGLFC), and 291-324 (CTHHKPCRNGATCTNTGQGSYTCSCRPGYTGANC). Residues 331–362 (CAPSPCRNGGSCTDLEDSYSCTCPPGFYGKVC) form the EGF-like 4; calcium-binding domain. EGF-like domains follow at residues 369–401 (CADGPCFNGGRCSDNPDGGYTCHCPAGFSGFNC) and 408–439 (CSSSPCSNGAKCVDLGNSYLCRCQTGFSGRYC). One can recognise an EGF-like 7; calcium-binding domain in the interval 446–477 (CASSPCANGGTCRDSVNDFSCTCPPGYTGRNC). N476 carries an N-linked (GlcNAc...) asparagine glycan. The EGF-like 8 domain occupies 484 to 515 (CEHAPCHNGATCHQRGQRYMCECAQGYGGANC). A helical transmembrane segment spans residues 538-560 (VAVCAGVVLVLLLLLGCAAVVVC). Topologically, residues 561 to 714 (VRLKLQKHQP…KDECVIATEV (154 aa)) are cytoplasmic. K605 is covalently cross-linked (Glycyl lysine isopeptide (Lys-Gly) (interchain with G-Cter in ubiquitin)). Position 630 is a phosphothreonine (T630). Over residues 644-656 (ATVRDAHSKRDTK) the composition is skewed to basic and acidic residues. The segment at 644–690 (ATVRDAHSKRDTKCQSQGSVGEEKSTSTLRGGEVPDRKRPESVYSTS) is disordered. A Phosphoserine; by PKB modification is found at S685. Residue S688 is modified to Phosphoserine. The interval 711 to 714 (ATEV) is interaction with MAGI1.

As to quaternary structure, homodimer. Interacts with TJP1. Interacts with MAGI1 (via PDZ domain); forms a complex with CTNNB1 and CDH2 and promotes recruitment to the adherens junction and stabilization on the cell surface. Interacts with PSEN1; undergoes a presenilin-dependent gamma-secretase cleavage that releases a Dll1-intracellular form. Interacts with MFAP5. Interacts with MIB1. Interacts with NEURL1B; leads to ubiquitination. Interacts with NEURL1. Interacts with SYNJ2BP; enhances DLL1 protein stability, and promotes Notch signaling in endothelial cells. Interacts with MAGI1, MAGI2, MAGI3 and MPDZ. Interacts (via ubiquitin) with EPN1 (via IUM domain); binding with NOTCH1 attached to neighboring cell, promotes ligand ubiquitination and EPN1 interaction, leading to NECD transendocytosis and Notch signaling. Interacts with NOTCH1. Ubiquitinated by MIB (MIB1 or MIB2), leading to its endocytosis and subsequent degradation. Ubiquitinated; promotes recycling back to the plasma membrane and confers a strong affinity for NOTCH1. Mono- and multi-ubiquitinated. Multi-ubiquitination of Lys-605 by MIB1 promotes both cis and trans-interaction with NOTCH1, as well as activation of Notch signaling. Ubiquitinated by NEURL1B. In terms of processing, phosphorylated in a membrane association-dependent manner. Phosphorylation at Ser-688 requires the presence of Ser-685, whereas phosphorylation at Thr-630 and Ser-685 occur independently of the other sites. Phosphorylation is required for full ligand activity in vitro and affects surface presentation, ectodomain shedding, and endocytosis. Post-translationally, O-fucosylated. Can be elongated to a disaccharide by MFNG.

The protein localises to the apical cell membrane. Its subcellular location is the cell junction. The protein resides in the adherens junction. It is found in the membrane raft. Functionally, transmembrane ligand protein of NOTCH1, NOTCH2 and NOTCH3 receptors that binds the extracellular domain (ECD) of Notch receptor in a cis and trans fashion manner. Following transinteraction, ligand cells produce mechanical force that depends of a clathrin-mediated endocytosis, requiring ligand ubiquitination, EPN1 interaction, and actin polymerisation; these events promote Notch receptor extracellular domain (NECD) transendocytosis and triggers Notch signaling through induction of cleavage, hyperphosphorylation, and nuclear accumulation of the intracellular domain of Notch receptors (NICD). Is required for embryonic development and maintenance of adult stem cells in many different tissues and immune systeme; the DLL1-induced Notch signaling is mediated through an intercellular communication that regulates cell lineage, cell specification, cell patterning and morphogenesis through effects on differentiation and proliferation. Plays a role in brain development at different level, namely by regulating neuronal differentiation of neural precursor cells via cell-cell interaction, most likely through the lateral inhibitory system in an endogenous level dependent-manner. During neocortex development, Dll1-Notch signaling transmission is mediated by dynamic interactions between intermediate neurogenic progenitors and radial glia; the cell-cell interactions are mediated via dynamic and transient elongation processes, likely to reactivate/maintain Notch activity in neighboring progenitors, and coordinate progenitor cell division and differentiation across radial and zonal boundaries. During cerebellar development, regulates Bergmann glial monolayer formation and its morphological maturation through a Notch signaling pathway. At the retina and spinal cord level, regulates neurogenesis by preventing the premature differentiation of neural progenitors and also by maintaining progenitors in spinal cord through Notch signaling pathway. Also controls neurogenesis of the neural tube in a progenitor domain-specific fashion along the dorsoventral axis. Maintains quiescence of neural stem cells and plays a role as a fate determinant that segregates asymmetrically to one daughter cell during neural stem cells mitosis, resulting in neuronal differentiation in Dll1-inheriting cell. Plays a role in immune systeme development, namely the development of all T-cells and marginal zone (MZ) B cells. Blocks the differentiation of progenitor cells into the B-cell lineage while promoting the emergence of a population of cells with the characteristics of a T-cell/NK-cell precursor. Also plays a role during muscle development. During early development, inhibits myoblasts differentiation from the medial dermomyotomal lip and later regulates progenitor cell differentiation. Directly modulates cell adhesion and basal lamina formation in satellite cells through Notch signaling. Maintains myogenic progenitors pool by suppressing differentiation through down-regulation of MYOD1 and is required for satellite cell homing and PAX7 expression. During craniofacial and trunk myogenesis suppresses differentiation of cranial mesoderm-derived and somite-derived muscle via MYOD1 regulation but in cranial mesoderm-derived progenitors, is neither required for satellite cell homing nor for PAX7 expression. Also plays a role during pancreatic cell development. During type B pancreatic cell development, may be involved in the initiation of proximodistal patterning in the early pancreatic epithelium. Stimulates multipotent pancreatic progenitor cells proliferation and pancreatic growth by maintaining HES1 expression and PTF1A protein levels. During fetal stages of development, is required to maintain arterial identity and the responsiveness of arterial endothelial cells for VEGFA through regulation of KDR activation and NRP1 expression. Controls sprouting angiogenesis and subsequent vertical branch formation through regulation on tip cell differentiation. Negatively regulates goblet cell differentiation in intestine and controls secretory fat commitment through lateral inhibition in small intestine. Plays a role during inner ear development; negatively regulates auditory hair cell differentiation. Plays a role during nephron development through Notch signaling pathway. Regulates growth, blood pressure and energy homeostasis. In Rattus norvegicus (Rat), this protein is Delta-like protein 1 (Dll1).